The primary structure comprises 183 residues: Ribulose bisphosphate carboxylase small subunit, chloroplastic 3 (183 aa).

A chloroplast-targeting transit peptide spans 1 to 57; it reads MASSLMSNAATTMAAATTTAQANMVAPFNGLKSVSAFPVTRKNNDITSVASNGGRVQ.

This sequence belongs to the RuBisCO small chain family. In terms of assembly, heterohexadecamer of 8 large and 8 small subunits.

Its subcellular location is the plastid. It localises to the chloroplast. Functionally, ruBisCO catalyzes two reactions: the carboxylation of D-ribulose 1,5-bisphosphate, the primary event in carbon dioxide fixation, as well as the oxidative fragmentation of the pentose substrate. Both reactions occur simultaneously and in competition at the same active site. Although the small subunit is not catalytic it is essential for maximal activity. This Mesembryanthemum crystallinum (Common ice plant) protein is Ribulose bisphosphate carboxylase small subunit, chloroplastic 3.